The following is a 522-amino-acid chain: Tyrosine-protein phosphatase 1 (522 aa).

Residues 32–63 (RSNSSISLSSSSHSSFSRMGSLGSLPTNSGSS) form a disordered region. Positions 33–63 (SNSSISLSSSSHSSFSRMGSLGSLPTNSGSS) are enriched in low complexity. One can recognise a Tyrosine-protein phosphatase domain in the interval 97-471 (IKEEFRLLEE…LFCYKTILDE (375 aa)). Cys-310 serves as the catalytic Phosphocysteine intermediate. Residues 327 to 426 (MKKLDHYFKQ…DDAAESDLKY (100 aa)) form a PTPase insert (Asn-rich) region. Residues 382 to 410 (NNNNNNNLNNNNNINNNSNGSNNTPQTEP) are compositionally biased toward low complexity. The interval 382–420 (NNNNNNNLNNNNNINNNSNGSNNTPQTEPNNEEDDDDAA) is disordered. The span at 411-420 (NNEEDDDDAA) shows a compositional bias: acidic residues.

This sequence belongs to the protein-tyrosine phosphatase family. Non-receptor class subfamily. Expressed predominantly in anterior-like cells and to a lesser degree in prestalk cells.

It is found in the cytoplasm. Its subcellular location is the cell membrane. It catalyses the reaction O-phospho-L-tyrosyl-[protein] + H2O = L-tyrosyl-[protein] + phosphate. May have a role in growth and in the early stages of development. Affects the timing of development. This Dictyostelium discoideum (Social amoeba) protein is Tyrosine-protein phosphatase 1 (ptpA1-1).